A 307-amino-acid polypeptide reads, in one-letter code: tRNA pseudouridine synthase B (307 aa).

Asp-38 acts as the Nucleophile in catalysis.

This sequence belongs to the pseudouridine synthase TruB family. Type 1 subfamily.

It catalyses the reaction uridine(55) in tRNA = pseudouridine(55) in tRNA. Its function is as follows. Responsible for synthesis of pseudouridine from uracil-55 in the psi GC loop of transfer RNAs. This Bacillus anthracis protein is tRNA pseudouridine synthase B.